Consider the following 196-residue polypeptide: MTIKLIVGLANPGAEYAQTRHNAGAWFVDALAERHGQSLKEESKFFGYTARLSLAGHDLRLLVPTTFMNLSGKAVSALAGFYRIAPDEILVAHDELDLPPGVAKLKLGGGNGGHNGLKDIQSKLGNNPNFHRLRIGIGHPGDKSKVVGFVLGKPLASEQPLIDDAIDEALRCTDLLMQDGMDKAMNRLNGFRASAR.

Y16 provides a ligand contact to tRNA. H21 serves as the catalytic Proton acceptor. TRNA-binding residues include F67, N69, and N115.

Belongs to the PTH family. Monomer.

It is found in the cytoplasm. The catalysed reaction is an N-acyl-L-alpha-aminoacyl-tRNA + H2O = an N-acyl-L-amino acid + a tRNA + H(+). Its function is as follows. Hydrolyzes ribosome-free peptidyl-tRNAs (with 1 or more amino acids incorporated), which drop off the ribosome during protein synthesis, or as a result of ribosome stalling. Functionally, catalyzes the release of premature peptidyl moieties from peptidyl-tRNA molecules trapped in stalled 50S ribosomal subunits, and thus maintains levels of free tRNAs and 50S ribosomes. The sequence is that of Peptidyl-tRNA hydrolase from Edwardsiella ictaluri (strain 93-146).